Reading from the N-terminus, the 421-residue chain is Acetylglutamate kinase (421 aa).

Residues 1–252 (MASAKEISQY…PLESSVSITR (252 aa)) are acetylglutamate kinase. Substrate-binding positions include 59 to 60 (AG), R81, and N170. Positions 274–420 (ERVIRATTWK…HCTQHPPTLI (147 aa)) constitute an N-acetyltransferase domain.

This sequence in the N-terminal section; belongs to the acetylglutamate kinase family. ArgB subfamily.

It localises to the cytoplasm. The catalysed reaction is N-acetyl-L-glutamate + ATP = N-acetyl-L-glutamyl 5-phosphate + ADP. Its pathway is amino-acid biosynthesis; L-arginine biosynthesis; N(2)-acetyl-L-ornithine from L-glutamate: step 2/4. In Xylella fastidiosa (strain Temecula1 / ATCC 700964), this protein is Acetylglutamate kinase (argB).